A 251-amino-acid polypeptide reads, in one-letter code: Flap endonuclease Xni (251 aa).

Residue aspartate 104 coordinates Mg(2+). The region spanning 160–249 is the 5'-3' exonuclease domain; that stretch reads VTPEQLADYW…LDGNLQQLRL (90 aa). The K(+) site is built by leucine 171, alanine 172, proline 180, valine 182, and isoleucine 185. The interaction with DNA stretch occupies residues 184-189; that stretch reads GIGPKS.

It belongs to the Xni family. Mg(2+) is required as a cofactor. It depends on K(+) as a cofactor.

Has flap endonuclease activity. During DNA replication, flap endonucleases cleave the 5'-overhanging flap structure that is generated by displacement synthesis when DNA polymerase encounters the 5'-end of a downstream Okazaki fragment. This chain is Flap endonuclease Xni, found in Klebsiella pneumoniae subsp. pneumoniae (strain ATCC 700721 / MGH 78578).